The following is a 438-amino-acid chain: Histidinol dehydrogenase (438 aa).

Positions 137, 198, and 221 each coordinate NAD(+). Positions 244, 266, and 269 each coordinate substrate. Q266 and H269 together coordinate Zn(2+). Catalysis depends on proton acceptor residues E334 and H335. Substrate contacts are provided by H335, D368, E422, and H427. Zn(2+) is bound at residue D368. Zn(2+) is bound at residue H427.

This sequence belongs to the histidinol dehydrogenase family. It depends on Zn(2+) as a cofactor.

The catalysed reaction is L-histidinol + 2 NAD(+) + H2O = L-histidine + 2 NADH + 3 H(+). It participates in amino-acid biosynthesis; L-histidine biosynthesis; L-histidine from 5-phospho-alpha-D-ribose 1-diphosphate: step 9/9. In terms of biological role, catalyzes the sequential NAD-dependent oxidations of L-histidinol to L-histidinaldehyde and then to L-histidine. The polypeptide is Histidinol dehydrogenase (Aromatoleum aromaticum (strain DSM 19018 / LMG 30748 / EbN1) (Azoarcus sp. (strain EbN1))).